The primary structure comprises 1060 residues: DNA topoisomerase 1 (1060 aa).

The 141-residue stretch at Met-1–Lys-141 folds into the Toprim domain. Residues Glu-7 and Asp-107 each coordinate Mg(2+). The Topo IA-type catalytic domain maps to Asn-156–Leu-947. Residues Ser-196–Gln-201 are interaction with DNA. Residues Leu-482–Ile-591 form the DOD-type homing endonuclease domain. Residue Tyr-690 is the O-(5'-phospho-DNA)-tyrosine intermediate of the active site. Residues Cys-978–Cys-1006 form a C4-type 1 zinc finger. The C4-type 2; atypical zinc-finger motif lies at Cys-1025 to Cys-1050.

Belongs to the type IA topoisomerase family. In terms of assembly, monomer. Requires Mg(2+) as cofactor. Post-translationally, this protein undergoes a protein self splicing that involves a post-translational excision of the intervening region (intein) followed by peptide ligation.

It catalyses the reaction ATP-independent breakage of single-stranded DNA, followed by passage and rejoining.. Functionally, releases the supercoiling and torsional tension of DNA, which is introduced during the DNA replication and transcription, by transiently cleaving and rejoining one strand of the DNA duplex. Introduces a single-strand break via transesterification at a target site in duplex DNA. The scissile phosphodiester is attacked by the catalytic tyrosine of the enzyme, resulting in the formation of a DNA-(5'-phosphotyrosyl)-enzyme intermediate and the expulsion of a 3'-OH DNA strand. The free DNA strand then undergoes passage around the unbroken strand, thus removing DNA supercoils. Finally, in the religation step, the DNA 3'-OH attacks the covalent intermediate to expel the active-site tyrosine and restore the DNA phosphodiester backbone. This Pyrococcus furiosus (strain ATCC 43587 / DSM 3638 / JCM 8422 / Vc1) protein is DNA topoisomerase 1 (topA).